A 226-amino-acid chain; its full sequence is X-linked lymphocyte-regulated protein 3A (226 aa).

The span at 1-18 (MSSRERKATDTAGRHSRM) shows a compositional bias: basic and acidic residues. The interval 1 to 72 (MSSRERKATD…QDLVQEFEEP (72 aa)) is disordered. Polar residues predominate over residues 21–30 (NLSSDDSQNP). Basic and acidic residues-rich tracts occupy residues 39–48 (EVLDAGREDI) and 56–65 (QQARKEKQDL). A coiled-coil region spans residues 155–210 (ETLTLQKNRMEEFKSLCEKYLEKLEVLRDSRGNSIAEELRRLIATLEIKLLMLHNQ).

It belongs to the XLR/SYCP3 family. As to expression, expressed in lymphoid cells.

This chain is X-linked lymphocyte-regulated protein 3A (Xlr3a), found in Mus musculus (Mouse).